Reading from the N-terminus, the 259-residue chain is Tryptophan synthase alpha chain (259 aa).

Residues glutamate 48 and aspartate 59 each act as proton acceptor in the active site.

It belongs to the TrpA family. As to quaternary structure, tetramer of two alpha and two beta chains.

The catalysed reaction is (1S,2R)-1-C-(indol-3-yl)glycerol 3-phosphate + L-serine = D-glyceraldehyde 3-phosphate + L-tryptophan + H2O. Its pathway is amino-acid biosynthesis; L-tryptophan biosynthesis; L-tryptophan from chorismate: step 5/5. The alpha subunit is responsible for the aldol cleavage of indoleglycerol phosphate to indole and glyceraldehyde 3-phosphate. This Syntrophomonas wolfei subsp. wolfei (strain DSM 2245B / Goettingen) protein is Tryptophan synthase alpha chain.